We begin with the raw amino-acid sequence, 1165 residues long: Leptin receptor (1165 aa).

Residues 1–21 form the signal peptide; sequence MICQKFCVVLLHWEFIYVITA. At 22 to 839 the chain is on the extracellular side; that stretch reads FNLSYPITPW…QDDIEKHQSD (818 aa). 6 N-linked (GlcNAc...) asparagine glycosylation sites follow: asparagine 23, asparagine 41, asparagine 56, asparagine 73, asparagine 81, and asparagine 98. 5 cysteine pairs are disulfide-bonded: cysteine 37–cysteine 90, cysteine 89–cysteine 99, cysteine 131–cysteine 142, cysteine 186–cysteine 196, and cysteine 188–cysteine 193. N-linked (GlcNAc...) asparagine glycosylation occurs at asparagine 187. 4 N-linked (GlcNAc...) asparagine glycosylation sites follow: asparagine 206, asparagine 276, asparagine 347, and asparagine 397. A Fibronectin type-III 1 domain is found at 239–333; that stretch reads PPLGLHMEIT…TPRVFTTQDV (95 aa). The Ig-like domain maps to 331 to 429; sequence QDVIYFPPKI…HRYAELYVID (99 aa). 5 cysteine pairs are disulfide-bonded: cysteine 352-cysteine 412, cysteine 413-cysteine 418, cysteine 436-cysteine 447, cysteine 473-cysteine 528, and cysteine 488-cysteine 498. A leptin-binding region spans residues 467-484; it reads HRSSLYCSDIPSIHPISE. N-linked (GlcNAc...) asparagine glycosylation is found at asparagine 516, asparagine 624, asparagine 659, asparagine 688, asparagine 697, asparagine 728, and asparagine 750. Fibronectin type-III domains are found at residues 539–634, 639–732, and 740–833; these read PPSS…TVVM, PMRG…LTFS, and IVQS…QDDI. The WSXWS motif motif lies at 622 to 626; sequence WSNWS. The chain crosses the membrane as a helical span at residues 840–862; it reads AGLYVIVPVIISSSILLLGTLLI. Topologically, residues 863 to 1165 are cytoplasmic; it reads SHQRMKKLFW…MENKMCDLTV (303 aa). A Box 1 motif motif is present at residues 871–879; the sequence is FWEDVPNPK. Serine 882 is modified (phosphoserine). Positions 893-898 are required for JAK2 activation; sequence ETFEHL. The segment at 898-906 is required for STAT3 phosphorylation; sequence LFIKHTASV. A Phosphotyrosine; by JAK2 modification is found at tyrosine 986. Tyrosine 1079 is modified (phosphotyrosine). Tyrosine 1141 is modified (phosphotyrosine; by JAK2).

The protein belongs to the type I cytokine receptor family. Type 2 subfamily. As to quaternary structure, present as a mixture of monomers and dimers. The phosphorylated receptor binds a number of SH2 domain-containing proteins such as JAK2, STAT3, PTPN11, and SOCS3. Interaction with SOCS3 inhibits JAK/STAT signaling and MAPK cascade. Post-translationally, on ligand binding, phosphorylated on two conserved C-terminal tyrosine residues (isoform B only) by JAK2. Tyr-986 is required for complete binding and activation of PTPN11, ERK/FOS activation,for interaction with SOCS3 and SOCS3 mediated inhibition of leptin signaling. Phosphorylation on Tyr-1141 is required for STAT3 binding/activation. Phosphorylation of Tyr-1079 has a more accessory role. As to expression, isoform A is expressed in fetal liver and in hematopoietic tissues and choroid plexus. In adults highest expression in heart, liver, small intestine, prostate and ovary. Low level in lung and kidney. Isoform B is highly expressed in hypothalamus, but also in skeletal muscle. Detected in fundic and antral epithelial cells of the gastric mucosa. Isoform B and isoform A are expressed by NK cells (at protein level).

It is found in the cell membrane. Its subcellular location is the basolateral cell membrane. It localises to the secreted. Its function is as follows. Receptor for hormone LEP/leptin. On ligand binding, mediates LEP central and peripheral effects through the activation of different signaling pathways such as JAK2/STAT3 and MAPK cascade/FOS. In the hypothalamus, LEP acts as an appetite-regulating factor that induces a decrease in food intake and an increase in energy consumption by inducing anorexinogenic factors and suppressing orexigenic neuropeptides, also regulates bone mass and secretion of hypothalamo-pituitary-adrenal hormones. In the periphery, increases basal metabolism, influences reproductive function, regulates pancreatic beta-cell function and insulin secretion, is pro-angiogenic and affects innate and adaptive immunity. Control of energy homeostasis and melanocortin production (stimulation of POMC and full repression of AgRP transcription) is mediated by STAT3 signaling, whereas distinct signals regulate NPY and the control of fertility, growth and glucose homeostasis. Involved in the regulation of counter-regulatory response to hypoglycemia by inhibiting neurons of the parabrachial nucleus. Has a specific effect on T lymphocyte responses, differentially regulating the proliferation of naive and memory T -ells. Leptin increases Th1 and suppresses Th2 cytokine production. Functionally, may transport LEP across the blood-brain barrier. Binds LEP and mediates LEP endocytosis. Does not induce phosphorylation of and activate STAT3. Antagonizes Isoform A and isoform B-mediated LEP binding and endocytosis. The chain is Leptin receptor (LEPR) from Homo sapiens (Human).